A 1949-amino-acid polypeptide reads, in one-letter code: Protein GREB1 (1949 aa).

Disordered stretches follow at residues 52–77 (EGGSRVDNEEEEEEGEGGLETNGPPN), 302–334 (ILSNSGPPKKRHKGWSPESPSAPDGGCPQGGGN), and 1085–1210 (EALE…GQRS). Positions 59–68 (NEEEEEEGEG) are enriched in acidic residues. Basic and acidic residues-rich tracts occupy residues 1085–1095 (EALESDAEKLS) and 1110–1126 (TSEKRSPMKRERSRSHD). Residues 1127–1147 (SASSSLSSKASGSALGGESSA) are compositionally biased toward low complexity. Over residues 1166 to 1178 (PAEEGRAPGEKQR) the composition is skewed to basic and acidic residues. The helical transmembrane segment at 1868 to 1888 (DLLFSGLLLYLCDSFVGASFL) threads the bilayer.

This sequence belongs to the GREB1 family. In terms of tissue distribution, expressed in proliferating prostatic tissue and prostate cancer.

The protein resides in the membrane. Its function is as follows. May play a role in estrogen-stimulated cell proliferation. Acts as a regulator of hormone-dependent cancer growth in breast and prostate cancers. This Homo sapiens (Human) protein is Protein GREB1 (GREB1).